A 272-amino-acid polypeptide reads, in one-letter code: Putative pyruvate, phosphate dikinase regulatory protein (272 aa).

151–158 (GISRTSKT) contributes to the ADP binding site.

Belongs to the pyruvate, phosphate/water dikinase regulatory protein family. PDRP subfamily.

It catalyses the reaction N(tele)-phospho-L-histidyl/L-threonyl-[pyruvate, phosphate dikinase] + ADP = N(tele)-phospho-L-histidyl/O-phospho-L-threonyl-[pyruvate, phosphate dikinase] + AMP + H(+). The catalysed reaction is N(tele)-phospho-L-histidyl/O-phospho-L-threonyl-[pyruvate, phosphate dikinase] + phosphate + H(+) = N(tele)-phospho-L-histidyl/L-threonyl-[pyruvate, phosphate dikinase] + diphosphate. Its function is as follows. Bifunctional serine/threonine kinase and phosphorylase involved in the regulation of the pyruvate, phosphate dikinase (PPDK) by catalyzing its phosphorylation/dephosphorylation. In Staphylococcus aureus (strain Mu3 / ATCC 700698), this protein is Putative pyruvate, phosphate dikinase regulatory protein.